The chain runs to 295 residues: MSKIPSVNIKELLDAGVHFGHKTSRWNPKMGSYIYGERDDVHIIDLRQSAVLMSVALNAIYETVKKDGKILFVSTKIQASDIIAEYAEKCGQYYVNHRWLGGMLTNWKTIAGSIEKLNKLEKTLGNEEALMGYTKKEILDMSRKKDKLLLSLAGIRNLNSKPDLLVVIDTNKEHIAINEAVKLNVPIVAVVDTNSNPDNVDYPIPGNDDSIRSIRLYCSLFADAALQGLAESMKASGVDMGAIQEHTDKALTSKSVSKLKQTKKFSKMKNIDEETNTEFEQALNDADKNKNSENA.

Belongs to the universal ribosomal protein uS2 family.

This is Small ribosomal subunit protein uS2 from Rickettsia canadensis (strain McKiel).